The following is a 252-amino-acid chain: Enolase-phosphatase E1 (252 aa).

2 residues coordinate Mg(2+): Asp14 and Glu16. Substrate contacts are provided by residues 142 to 143 and Lys176; that span reads SS. Residue Asp201 coordinates Mg(2+).

Belongs to the HAD-like hydrolase superfamily. MasA/MtnC family. In terms of assembly, monomer. Mg(2+) is required as a cofactor.

It localises to the cytoplasm. It is found in the nucleus. It carries out the reaction 5-methylsulfanyl-2,3-dioxopentyl phosphate + H2O = 1,2-dihydroxy-5-(methylsulfanyl)pent-1-en-3-one + phosphate. It functions in the pathway amino-acid biosynthesis; L-methionine biosynthesis via salvage pathway; L-methionine from S-methyl-5-thio-alpha-D-ribose 1-phosphate: step 3/6. It participates in amino-acid biosynthesis; L-methionine biosynthesis via salvage pathway; L-methionine from S-methyl-5-thio-alpha-D-ribose 1-phosphate: step 4/6. Bifunctional enzyme that catalyzes the enolization of 2,3-diketo-5-methylthiopentyl-1-phosphate (DK-MTP-1-P) into the intermediate 2-hydroxy-3-keto-5-methylthiopentenyl-1-phosphate (HK-MTPenyl-1-P), which is then dephosphorylated to form the acireductone 1,2-dihydroxy-3-keto-5-methylthiopentene (DHK-MTPene). In Drosophila ananassae (Fruit fly), this protein is Enolase-phosphatase E1.